Consider the following 402-residue polypeptide: AA9 family lytic polysaccharide monooxygenase E (402 aa).

An N-terminal signal peptide occupies residues 1–16 (MSRLVSFASLLAAVNA). Residue histidine 17 participates in Cu(2+) binding. Disulfide bonds link cysteine 72–cysteine 194 and cysteine 113–cysteine 117. An N-linked (GlcNAc...) asparagine glycan is attached at asparagine 75. A Cu(2+)-binding site is contributed by histidine 102. N-linked (GlcNAc...) asparagine glycosylation occurs at asparagine 154. O2 contacts are provided by histidine 180 and glutamine 189. Tyrosine 191 is a binding site for Cu(2+). The 37-residue stretch at 364–400 (GSNPLYAQCGGLNFKGASGCVAGATCKKMNPYYSQCV) folds into the CBM1 domain.

This sequence belongs to the polysaccharide monooxygenase AA9 family. It depends on Cu(2+) as a cofactor.

It localises to the secreted. It catalyses the reaction [(1-&gt;4)-beta-D-glucosyl]n+m + reduced acceptor + O2 = 4-dehydro-beta-D-glucosyl-[(1-&gt;4)-beta-D-glucosyl]n-1 + [(1-&gt;4)-beta-D-glucosyl]m + acceptor + H2O.. Its function is as follows. Lytic polysaccharide monooxygenase (LPMO) that depolymerizes crystalline and amorphous polysaccharides via the oxidation of scissile alpha- or beta-(1-4)-glycosidic bonds, yielding C1 or C4 oxidation products. Catalysis by LPMOs requires the reduction of the active-site copper from Cu(II) to Cu(I) by a reducing agent and H(2)O(2) or O(2) as a cosubstrate. The sequence is that of AA9 family lytic polysaccharide monooxygenase E from Emericella nidulans (strain FGSC A4 / ATCC 38163 / CBS 112.46 / NRRL 194 / M139) (Aspergillus nidulans).